The primary structure comprises 172 residues: HAD-like hydrolase superfamily protein P8B7.31 (172 aa).

Residue D14 is the Nucleophile of the active site. Mg(2+)-binding residues include D14, D16, and D137. The active-site Proton donor is the D16.

Belongs to the HAD-like hydrolase superfamily.

Its subcellular location is the cytoplasm. The protein resides in the nucleus. This Schizosaccharomyces pombe (strain 972 / ATCC 24843) (Fission yeast) protein is HAD-like hydrolase superfamily protein P8B7.31.